An 85-amino-acid chain; its full sequence is U4-theraphotoxin-Hhn1e (85 aa).

An N-terminal signal peptide occupies residues 1–22; it reads MKVTLIAILTCAAVLVLHTTAA. The propeptide occupies 23-48; that stretch reads EELEAESQLMEVGMPDTELAAVDEER. Intrachain disulfides connect Cys52–Cys66, Cys56–Cys77, and Cys71–Cys82.

It belongs to the neurotoxin 12 (Hwtx-2) family. 02 (Hwtx-2) subfamily. As to expression, expressed by the venom gland.

The protein resides in the secreted. Its function is as follows. Postsynaptic neurotoxin. The chain is U4-theraphotoxin-Hhn1e from Cyriopagopus hainanus (Chinese bird spider).